Here is a 256-residue protein sequence, read N- to C-terminus: Pimeloyl-[acyl-carrier protein] methyl ester esterase (256 aa).

The 228-residue stretch at His-15–Pro-242 folds into the AB hydrolase-1 domain. Residues Trp-22, Ser-82 to Leu-83, and Phe-143 to Gln-147 each bind substrate. Ser-82 acts as the Nucleophile in catalysis. Active-site residues include Asp-207 and His-235. His-235 contacts substrate.

It belongs to the AB hydrolase superfamily. Carboxylesterase BioH family. In terms of assembly, monomer.

The protein resides in the cytoplasm. The enzyme catalyses 6-carboxyhexanoyl-[ACP] methyl ester + H2O = 6-carboxyhexanoyl-[ACP] + methanol + H(+). It functions in the pathway cofactor biosynthesis; biotin biosynthesis. In terms of biological role, the physiological role of BioH is to remove the methyl group introduced by BioC when the pimeloyl moiety is complete. It allows to synthesize pimeloyl-ACP via the fatty acid synthetic pathway through the hydrolysis of the ester bonds of pimeloyl-ACP esters. In Escherichia coli O7:K1 (strain IAI39 / ExPEC), this protein is Pimeloyl-[acyl-carrier protein] methyl ester esterase.